Here is a 243-residue protein sequence, read N- to C-terminus: Carboxy-S-adenosyl-L-methionine synthase (243 aa).

S-adenosyl-L-methionine-binding positions include Y40, 65–67 (GCS), 90–91 (DN), 118–119 (DI), N133, and R200.

This sequence belongs to the class I-like SAM-binding methyltransferase superfamily. Cx-SAM synthase family. Homodimer.

The enzyme catalyses prephenate + S-adenosyl-L-methionine = carboxy-S-adenosyl-L-methionine + 3-phenylpyruvate + H2O. Catalyzes the conversion of S-adenosyl-L-methionine (SAM) to carboxy-S-adenosyl-L-methionine (Cx-SAM). The chain is Carboxy-S-adenosyl-L-methionine synthase from Shewanella putrefaciens (strain CN-32 / ATCC BAA-453).